The chain runs to 304 residues: Endonuclease III-like protein 1 (304 aa).

A mitochondrion-targeting transit peptide spans 1–22 (MTALSARMLTRSRSLGPGAGPR). Residues 1–72 (MTALSARMLT…SDSEKGEGAE (72 aa)) are disordered. Positions 23-42 (GCREEPGPLRRREAAAEARK) are enriched in basic and acidic residues. The Bipartite nuclear localization signal signature appears at 28-52 (PGPLRRREAAAEARKSHSPVKRPRK). Residues 43-55 (SHSPVKRPRKAQR) are compositionally biased toward basic residues. 2 positions are modified to phosphoserine: serine 63 and serine 65. A HhH domain is found at 191 to 215 (HYGGDIPASVAELVALPGVGPKMAH). The active-site Nucleophile; for N-glycosylase activity is lysine 212. The [4Fe-4S] cluster site is built by cysteine 282, cysteine 289, cysteine 292, and cysteine 298.

The protein belongs to the Nth/MutY family. As to quaternary structure, interacts with YBX1. Interacts with ERCC5/XPG; the interaction stimulates NTHL1 activity and NTHL1 binding to its DNA substrate. [4Fe-4S] cluster serves as cofactor. Ubiquitinated by TRIM26; leading to proteasomal degradation. As to expression, widely expressed with highest levels in heart and lowest levels in lung and liver.

It localises to the nucleus. The protein resides in the mitochondrion. The enzyme catalyses 2'-deoxyribonucleotide-(2'-deoxyribose 5'-phosphate)-2'-deoxyribonucleotide-DNA = a 3'-end 2'-deoxyribonucleotide-(2,3-dehydro-2,3-deoxyribose 5'-phosphate)-DNA + a 5'-end 5'-phospho-2'-deoxyribonucleoside-DNA + H(+). Its activity is regulated as follows. APE1 displaces NTHL1 from the N-glycosylase-generated AP site in DNA, thereby increasing the turnover of the DNA N-glycosylase activity. AP lyase activity is stimulated by YBX1. ERCC5/XPG stimulates NTHL1 activity and NTHL1 binding to its DNA substrate. In terms of biological role, bifunctional DNA N-glycosylase with associated apurinic/apyrimidinic (AP) lyase function that catalyzes the first step in base excision repair (BER), the primary repair pathway for the repair of oxidative DNA damage. The DNA N-glycosylase activity releases the damaged DNA base from DNA by cleaving the N-glycosidic bond, leaving an AP site. The AP-lyase activity cleaves the phosphodiester bond 3' to the AP site by a beta-elimination. Primarily recognizes and repairs oxidative base damage of pyrimidines. Also has 8-oxo-7,8-dihydroguanine (8-oxoG) DNA glycosylase activity. Acts preferentially on DNA damage opposite guanine residues in DNA. Is able to process lesions in nucleosomes without requiring or inducing nucleosome disruption. This is Endonuclease III-like protein 1 from Homo sapiens (Human).